The sequence spans 199 residues: NADH-quinone oxidoreductase subunit C (199 aa).

This sequence belongs to the complex I 30 kDa subunit family. As to quaternary structure, NDH-1 is composed of 14 different subunits. Subunits NuoB, C, D, E, F, and G constitute the peripheral sector of the complex.

It is found in the cell inner membrane. It carries out the reaction a quinone + NADH + 5 H(+)(in) = a quinol + NAD(+) + 4 H(+)(out). Its function is as follows. NDH-1 shuttles electrons from NADH, via FMN and iron-sulfur (Fe-S) centers, to quinones in the respiratory chain. The immediate electron acceptor for the enzyme in this species is believed to be ubiquinone. Couples the redox reaction to proton translocation (for every two electrons transferred, four hydrogen ions are translocated across the cytoplasmic membrane), and thus conserves the redox energy in a proton gradient. This chain is NADH-quinone oxidoreductase subunit C, found in Cupriavidus pinatubonensis (strain JMP 134 / LMG 1197) (Cupriavidus necator (strain JMP 134)).